We begin with the raw amino-acid sequence, 481 residues long: Alpha-L-arabinofuranosidase 43 (481 aa).

The N-terminal stretch at 1–19 is a signal peptide; it reads MRFSVFTAAIAAAFSACCA. Residues N158, N176, and N365 are each glycosylated (N-linked (GlcNAc...) asparagine).

It belongs to the glycosyl hydrolase 43 family.

It localises to the secreted. The catalysed reaction is Hydrolysis of terminal non-reducing alpha-L-arabinofuranoside residues in alpha-L-arabinosides.. With respect to regulation, activity is significantly inhibited by SDS and partially inhibited by Ag(+), Fe(3+) and beta-mercaptoethanol. Functionally, alpha-L-arabinofuranosidase specific for the cleavage of alpha-1,3-linkage. Shows high activity against 4-nitrophenyl alpha-L-arabinofuranoside, debranched arabinan, and sugar beet arabinan. The polypeptide is Alpha-L-arabinofuranosidase 43 (Humicola insolens (Soft-rot fungus)).